Consider the following 318-residue polypeptide: Pyrimidine-specific ribonucleoside hydrolase RihA (318 aa).

The active site involves H240.

This sequence belongs to the IUNH family. RihA subfamily.

In terms of biological role, hydrolyzes cytidine or uridine to ribose and cytosine or uracil, respectively. The chain is Pyrimidine-specific ribonucleoside hydrolase RihA from Shewanella oneidensis (strain ATCC 700550 / JCM 31522 / CIP 106686 / LMG 19005 / NCIMB 14063 / MR-1).